The primary structure comprises 367 residues: Apolipoprotein A-V (367 aa).

A signal peptide spans 1 to 20; the sequence is MVAVLTWALALLSAFATAQT. Ser-56 bears the Phosphoserine mark.

This sequence belongs to the apolipoprotein A1/A4/E family. In terms of assembly, interacts with GPIHBP1. Interacts with SORL1; this interaction leads to APOA5 internalization and sorting either to lysosomes and degradation, or to the trans-Golgi network. Phosphorylated by FAM20C in the extracellular medium.

The protein localises to the secreted. The protein resides in the early endosome. It localises to the late endosome. Its subcellular location is the golgi apparatus. It is found in the trans-Golgi network. In terms of biological role, minor apolipoprotein mainly associated with HDL and to a lesser extent with VLDL. May also be associated with chylomicrons. Important determinant of plasma triglyceride (TG) levels by both being a potent stimulator of apo-CII lipoprotein lipase (LPL) TG hydrolysis and an inhibitor of the hepatic VLDL-TG production rate (without affecting the VLDL-apoB production rate). Activates poorly lecithin:cholesterol acyltransferase (LCAT) and does not enhance efflux of cholesterol from macrophages. Binds heparin. The protein is Apolipoprotein A-V (APOA5) of Phoca vitulina (Harbor seal).